Reading from the N-terminus, the 517-residue chain is Legumin A (517 aa).

The signal sequence occupies residues methionine 1 to alanine 21. Disulfide bonds link cysteine 31–cysteine 64 and cysteine 107–cysteine 339. Residues leucine 36–aspartate 232 enclose the Cupin type-1 1 domain. Positions valine 249 to glutamate 335 are disordered. Residues leucine 345–arginine 494 enclose the Cupin type-1 2 domain.

This sequence belongs to the 11S seed storage protein (globulins) family. In terms of assembly, hexamer; each subunit is composed of an acidic and a basic chain derived from a single precursor and linked by a disulfide bond.

In terms of biological role, this protein found in the seeds of many leguminous and non-leguminous plants is the source of sulfur-containing amino acids in seed meals. The polypeptide is Legumin A (LEGA) (Pisum sativum (Garden pea)).